Reading from the N-terminus, the 619-residue chain is Mitochondrial Rho GTPase 1-A (619 aa).

The Cytoplasmic segment spans residues 1 to 593 (MRKDVRILLV…TQADLKNSTF (593 aa)). The Miro 1 domain maps to 2 to 168 (RKDVRILLVG…FYYAQKAVLH (167 aa)). 5 residues coordinate GTP: lysine 14, glycine 16, lysine 17, threonine 18, and serine 19. Position 18 (threonine 18) interacts with Mg(2+). Proline 35 and aspartate 57 together coordinate Mg(2+). GTP-binding residues include serine 59, asparagine 118, lysine 119, aspartate 121, alanine 149, and lysine 150. EF-hand domains follow at residues 184 to 219 (SCIK…CFNI) and 304 to 339 (NAYL…FPYM). 9 residues coordinate Ca(2+): aspartate 197, aspartate 199, aspartate 201, glutamate 208, aspartate 317, aspartate 319, aspartate 321, alanine 323, and glutamate 328. In terms of domain architecture, Miro 2 spans 416–580 (RSVFRCNVLG…YTKLTTMAMY (165 aa)). GTP is bound by residues arginine 427, cysteine 429, glycine 430, lysine 431, serine 432, glycine 433, lysine 447, lysine 529, aspartate 531, threonine 559, and cysteine 560. A Mg(2+)-binding site is contributed by arginine 427. The chain crosses the membrane as a helical; Anchor for type IV membrane protein span at residues 594–616 (WLRASVGATVFAVLGFAMYKALL). Residues 617 to 619 (KQR) are Mitochondrial intermembrane-facing.

It belongs to the mitochondrial Rho GTPase family. Homodimer.

It localises to the mitochondrion outer membrane. It carries out the reaction GTP + H2O = GDP + phosphate + H(+). It catalyses the reaction ATP + H2O = ADP + phosphate + H(+). The catalysed reaction is UTP + H2O = UDP + phosphate + H(+). Atypical mitochondrial nucleoside-triphosphatase (NTPase) involved in mitochondrial trafficking. Probably involved in control of anterograde transport of mitochondria and their subcellular distribution. Can hydrolyze GTP, ATP and UTP. This is Mitochondrial Rho GTPase 1-A (rhot1a) from Danio rerio (Zebrafish).